We begin with the raw amino-acid sequence, 690 residues long: Glycine--tRNA ligase beta subunit (690 aa).

Belongs to the class-II aminoacyl-tRNA synthetase family. In terms of assembly, tetramer of two alpha and two beta subunits.

Its subcellular location is the cytoplasm. The enzyme catalyses tRNA(Gly) + glycine + ATP = glycyl-tRNA(Gly) + AMP + diphosphate. This is Glycine--tRNA ligase beta subunit from Tolumonas auensis (strain DSM 9187 / NBRC 110442 / TA 4).